A 1203-amino-acid chain; its full sequence is DNA-directed RNA polymerase subunit beta' (1203 aa).

Residues Cys-60, Cys-62, Cys-75, and Cys-78 each contribute to the Zn(2+) site. Positions 449, 451, and 453 each coordinate Mg(2+). Cys-818, Cys-892, Cys-899, and Cys-902 together coordinate Zn(2+).

This sequence belongs to the RNA polymerase beta' chain family. The RNAP catalytic core consists of 2 alpha, 1 beta, 1 beta' and 1 omega subunit. When a sigma factor is associated with the core the holoenzyme is formed, which can initiate transcription. Mg(2+) is required as a cofactor. It depends on Zn(2+) as a cofactor.

The catalysed reaction is RNA(n) + a ribonucleoside 5'-triphosphate = RNA(n+1) + diphosphate. In terms of biological role, DNA-dependent RNA polymerase catalyzes the transcription of DNA into RNA using the four ribonucleoside triphosphates as substrates. The sequence is that of DNA-directed RNA polymerase subunit beta' from Bacillus mycoides (strain KBAB4) (Bacillus weihenstephanensis).